We begin with the raw amino-acid sequence, 369 residues long: Deoxyuridine 5'-triphosphate nucleotidohydrolase (369 aa).

Substrate contacts are provided by residues 258-260 (RSS) and 364-365 (FG).

It belongs to the dUTPase family. It depends on Mg(2+) as a cofactor.

The catalysed reaction is dUTP + H2O = dUMP + diphosphate + H(+). Its function is as follows. Involved in nucleotide metabolism: produces dUMP, the immediate precursor of thymidine nucleotides and decreases the intracellular concentration of dUTP to avoid uracil incorporation into viral DNA. In Homo sapiens (Human), this protein is Deoxyuridine 5'-triphosphate nucleotidohydrolase.